The following is a 370-amino-acid chain: tRNA-specific 2-thiouridylase MnmA (370 aa).

Residues 10–17 and Met36 contribute to the ATP site; that span reads AMSGGVDS. The active-site Nucleophile is Cys111. Residues Cys111 and Cys209 are joined by a disulfide bond. ATP is bound at residue Gly135. The segment at 159–161 is interaction with tRNA; sequence KDQ. The active-site Cysteine persulfide intermediate is the Cys209.

Belongs to the MnmA/TRMU family.

The protein resides in the cytoplasm. It carries out the reaction S-sulfanyl-L-cysteinyl-[protein] + uridine(34) in tRNA + AH2 + ATP = 2-thiouridine(34) in tRNA + L-cysteinyl-[protein] + A + AMP + diphosphate + H(+). Catalyzes the 2-thiolation of uridine at the wobble position (U34) of tRNA, leading to the formation of s(2)U34. In Koribacter versatilis (strain Ellin345), this protein is tRNA-specific 2-thiouridylase MnmA.